A 203-amino-acid polypeptide reads, in one-letter code: Recombination protein RecR (203 aa).

Residues 57-72 form a C4-type zinc finger; sequence CARCNTFSETELCVLC. The Toprim domain maps to 80 to 175; the sequence is DVLCVVEMPA…SVSRIARGLP (96 aa).

Belongs to the RecR family.

In terms of biological role, may play a role in DNA repair. It seems to be involved in an RecBC-independent recombinational process of DNA repair. It may act with RecF and RecO. This is Recombination protein RecR from Laribacter hongkongensis (strain HLHK9).